Consider the following 2339-residue polypeptide: Voltage-dependent N-type calcium channel subunit alpha-1B (2339 aa).

The segment at M1–L37 is disordered. Topologically, residues M1–R90 are cytoplasmic. Gly residues predominate over residues G10–L37. Position 22 is an omega-N-methylarginine (R22). The I repeat unit spans residues N82–F359. The helical transmembrane segment at I91 to L114 threads the bilayer. Over E115–D131 the chain is Extracellular. A helical membrane pass occupies residues D132 to L152. At G153–R163 the chain is on the cytoplasmic side. Residues N164–A182 form a helical membrane-spanning segment. Residues G183–D187 are Extracellular-facing. The helical transmembrane segment at L188–V211 threads the bilayer. Topologically, residues V212–V221 are cytoplasmic. The helical transmembrane segment at P222 to F244 threads the bilayer. The Extracellular portion of the chain corresponds to Y245–W331. N-linked (GlcNAc...) asparagine glycosylation occurs at N256. A helical transmembrane segment spans residues N332–S356. The Cytoplasmic segment spans residues G357–Q482. The interval Q379–E396 is binding to the beta subunit. S411 is modified (phosphoserine). A451–T458 lines the ATP pocket. The II repeat unit spans residues E468–L712. Residues S483–M501 form a helical membrane-spanning segment. Over V502–T511 the chain is Extracellular. Residues T512–Y534 form a helical membrane-spanning segment. The Cytoplasmic segment spans residues G535–S544. S544 is a binding site for a 1,2-diacyl-sn-glycero-3-phospho-(1D-myo-inositol-4,5-bisphosphate). Residues S545 to I566 form a helical membrane-spanning segment. Topologically, residues K567–G573 are extracellular. Residues I574–F586 traverse the membrane as a helical segment. The a 1,2-diacyl-sn-glycero-3-phospho-(1D-myo-inositol-4,5-bisphosphate) site is built by R584 and K587. Residues K587 to N604 lie on the Cytoplasmic side of the membrane. The chain crosses the membrane as a helical span at residues S605–L630. Topologically, residues F631–G682 are extracellular. A helical transmembrane segment spans residues M683–V709. Residues D710 to Y1151 lie on the Cytoplasmic side of the membrane. S745, S748, and S783 each carry phosphoserine. Basic and acidic residues-rich tracts occupy residues P816–A826, K857–P886, G922–P932, and G965–A976. Disordered regions lie at residues P816 to G1038 and Q1054 to T1076. Residues R977–Q986 are compositionally biased toward basic residues. Over residues E990–L1029 the composition is skewed to basic and acidic residues. S1069 carries the post-translational modification Phosphoserine. The stretch at N1137–F1419 is one III repeat. The helical transmembrane segment at F1152–E1170 threads the bilayer. Over D1171–P1178 the chain is Extracellular. A helical membrane pass occupies residues R1179 to I1203. Residues D1204–D1217 lie on the Cytoplasmic side of the membrane. The helical transmembrane segment at L1218–G1238 threads the bilayer. Over S1239–I1244 the chain is Extracellular. A helical membrane pass occupies residues N1245 to L1265. At P1266 to L1283 the chain is on the cytoplasmic side. A helical membrane pass occupies residues N1284 to L1303. Residues F1304–M1390 lie on the Extracellular side of the membrane. The helical transmembrane segment at E1391–I1416 threads the bilayer. Over I1417–P1471 the chain is Cytoplasmic. Residues N1456–F1711 form an IV repeat. A helical transmembrane segment spans residues P1472–M1490. Residues K1491–E1498 lie on the Extracellular side of the membrane. The chain crosses the membrane as a helical span at residues Y1499–I1523. The Cytoplasmic portion of the chain corresponds to A1524–D1533. Residues A1534–I1555 form a helical membrane-spanning segment. The Extracellular segment spans residues A1556–N1563. N1563 carries an N-linked (GlcNAc...) asparagine glycan. Residues L1564–G1582 traverse the membrane as a helical segment. Residues Y1583–Y1601 lie on the Cytoplasmic side of the membrane. The helical transmembrane segment at V1602–F1621 threads the bilayer. Over G1622–F1683 the chain is Extracellular. The N-linked (GlcNAc...) asparagine glycan is linked to N1675. Residues A1684–I1707 traverse the membrane as a helical segment. Over M1708–C2339 the chain is Cytoplasmic. The EF-hand domain maps to H1724–P1759. Ca(2+)-binding residues include D1737, R1743, and D1748. A compositionally biased stretch (polar residues) spans S1916–S1931. Disordered stretches follow at residues S1916–S1968 and T1981–A2206. Over residues D1946 to S1960 the composition is skewed to basic and acidic residues. A compositionally biased stretch (basic residues) spans S2049–K2063. S2066 bears the Phosphoserine mark. Positions C2098–Q2116 are enriched in basic and acidic residues. Positions P2143–T2153 are enriched in low complexity. Over residues G2164–S2180 the composition is skewed to polar residues. S2224, S2233, and S2256 each carry phosphoserine.

This sequence belongs to the calcium channel alpha-1 subunit (TC 1.A.1.11) family. CACNA1B subfamily. As to quaternary structure, multisubunit complex consisting of alpha-1, alpha-2, beta and delta subunits in a 1:1:1:1 ratio. The channel activity is directed by the pore-forming and voltage-sensitive alpha-1 subunit. In many cases, this subunit is sufficient to generate voltage-sensitive calcium channel activity. The auxiliary subunits beta and alpha-2/delta linked by a disulfide bridge regulate the channel activity. Interacts with RIMS1. Interacts with FMR1 (via C-terminus); this interaction induces a decrease in the number of presynaptic functional CACNA1B channels at the cell surface. Post-translationally, phosphorylated in vitro by CaM-kinase II, PKA, PKC and CGPK. In terms of tissue distribution, isoform Alpha-1b-1 and isoform Alpha-1b-2 are expressed in the central nervous system, but not in skeletal muscle or aorta. Expressed in the cerebral white matter, cortex, hippocampus, basal ganglia, and cerebellum.

Its subcellular location is the membrane. The enzyme catalyses Ca(2+)(in) = Ca(2+)(out). Is specifically blocked by omega-conotoxin GVIA. Is specifically blocked by omega-conotoxin MVIIA (ziconotide). Is insensitive to dihydropyridines (DHP). With respect to regulation, is specifically blocked by omega-conotoxin MVIIA (ziconotide). Is insensitive to dihydropyridines (DHP). In terms of biological role, voltage-sensitive calcium channels (VSCC) mediate the entry of calcium ions into excitable cells and are also involved in a variety of calcium-dependent processes, including muscle contraction, hormone or neurotransmitter release, gene expression, cell motility, cell division and cell death. This alpha-1B subunit gives rise to N-type calcium currents. N-type calcium channels belong to the 'high-voltage activated' (HVA) group. They are involved in pain signaling. Calcium channels containing alpha-1B subunit may play a role in directed migration of immature neurons. Mediates Ca(2+) release probability at hippocampal neuronal soma and synaptic terminals. Functionally, voltage-sensitive calcium channels (VSCC) mediate the entry of calcium ions into excitable cells and are also involved in a variety of calcium-dependent processes, including muscle contraction, hormone or neurotransmitter release, gene expression, cell motility, cell division and cell death. This alpha-1B subunit gives rise to N-type calcium currents. This chain is Voltage-dependent N-type calcium channel subunit alpha-1B (CACNA1B), found in Homo sapiens (Human).